The following is a 683-amino-acid chain: UvrABC system protein B (683 aa).

The Helicase ATP-binding domain maps to 31–414; the sequence is AGFEKGYKEQ…ELERTDHKVE (384 aa). 44-51 is a binding site for ATP; that stretch reads GATGTGKT. A Beta-hairpin motif is present at residues 97-120; sequence YYDYYQPEAYVPQSDTYIEKDSAI. One can recognise a Helicase C-terminal domain in the interval 435 to 601; sequence QIDDLVGEIN…TIIKPVHDVI (167 aa). Positions 632-667 constitute a UVR domain; the sequence is KTMIKNLQEQMKEAAKKLDFEEAANLRDAIMELQSS. The tract at residues 662-683 is disordered; it reads MELQSSSRRPKTRKGKALNGKR. Positions 669–683 are enriched in basic residues; the sequence is RRPKTRKGKALNGKR.

Belongs to the UvrB family. In terms of assembly, forms a heterotetramer with UvrA during the search for lesions. Interacts with UvrC in an incision complex.

It is found in the cytoplasm. In terms of biological role, the UvrABC repair system catalyzes the recognition and processing of DNA lesions. A damage recognition complex composed of 2 UvrA and 2 UvrB subunits scans DNA for abnormalities. Upon binding of the UvrA(2)B(2) complex to a putative damaged site, the DNA wraps around one UvrB monomer. DNA wrap is dependent on ATP binding by UvrB and probably causes local melting of the DNA helix, facilitating insertion of UvrB beta-hairpin between the DNA strands. Then UvrB probes one DNA strand for the presence of a lesion. If a lesion is found the UvrA subunits dissociate and the UvrB-DNA preincision complex is formed. This complex is subsequently bound by UvrC and the second UvrB is released. If no lesion is found, the DNA wraps around the other UvrB subunit that will check the other stand for damage. The protein is UvrABC system protein B of Lactobacillus acidophilus (strain ATCC 700396 / NCK56 / N2 / NCFM).